The following is a 102-amino-acid chain: Putative sortase YwpE (102 aa).

H17 acts as the Proton donor/acceptor in catalysis. C78 acts as the Acyl-thioester intermediate in catalysis.

It belongs to the bacterial sortase family.

Its function is as follows. Seems not to play a major role if any as a sortase. The chain is Putative sortase YwpE (ywpE) from Bacillus subtilis (strain 168).